The primary structure comprises 198 residues: Protein GrpE (198 aa).

Belongs to the GrpE family. As to quaternary structure, homodimer.

It localises to the cytoplasm. Participates actively in the response to hyperosmotic and heat shock by preventing the aggregation of stress-denatured proteins, in association with DnaK and GrpE. It is the nucleotide exchange factor for DnaK and may function as a thermosensor. Unfolded proteins bind initially to DnaJ; upon interaction with the DnaJ-bound protein, DnaK hydrolyzes its bound ATP, resulting in the formation of a stable complex. GrpE releases ADP from DnaK; ATP binding to DnaK triggers the release of the substrate protein, thus completing the reaction cycle. Several rounds of ATP-dependent interactions between DnaJ, DnaK and GrpE are required for fully efficient folding. This Actinobacillus pleuropneumoniae serotype 5b (strain L20) protein is Protein GrpE.